The following is a 217-amino-acid chain: Serine acetyltransferase (217 aa).

It belongs to the transferase hexapeptide repeat family.

It localises to the cytoplasm. The catalysed reaction is L-serine + acetyl-CoA = O-acetyl-L-serine + CoA. It participates in amino-acid biosynthesis; L-cysteine biosynthesis; L-cysteine from L-serine: step 1/2. Its activity is regulated as follows. Inhibited by cysteine. Functionally, catalyzes the acetylation of serine by acetyl-CoA to produce O-acetylserine (OAS). The protein is Serine acetyltransferase of Bacillus pumilus (strain SAFR-032).